A 112-amino-acid chain; its full sequence is T cell receptor alpha variable 7 (112 aa).

The first 21 residues, 1–21, serve as a signal peptide directing secretion; that stretch reads MEKMRRPVLIIFCLCLGWANG. The region spanning 22–112 is the Ig-like domain; it reads ENQVEHSPHF…DSATYFCAVD (91 aa). C44 and C109 form a disulfide bridge. N84 and N90 each carry an N-linked (GlcNAc...) asparagine glycan.

In terms of assembly, alpha-beta TR is a heterodimer composed of an alpha and beta chain; disulfide-linked. The alpha-beta TR is associated with the transmembrane signaling CD3 coreceptor proteins to form the TR-CD3 (TcR or TCR). The assembly of alpha-beta TR heterodimers with CD3 occurs in the endoplasmic reticulum where a single alpha-beta TR heterodimer associates with one CD3D-CD3E heterodimer, one CD3G-CD3E heterodimer and one CD247 homodimer forming a stable octameric structure. CD3D-CD3E and CD3G-CD3E heterodimers preferentially associate with TR alpha and TR beta chains, respectively. The association of the CD247 homodimer is the last step of TcR assembly in the endoplasmic reticulum and is required for transport to the cell surface.

It is found in the cell membrane. V region of the variable domain of T cell receptor (TR) alpha chain that participates in the antigen recognition. Alpha-beta T cell receptors are antigen specific receptors which are essential to the immune response and are present on the cell surface of T lymphocytes. Recognize peptide-major histocompatibility (MH) (pMH) complexes that are displayed by antigen presenting cells (APC), a prerequisite for efficient T cell adaptive immunity against pathogens. Binding of alpha-beta TR to pMH complex initiates TR-CD3 clustering on the cell surface and intracellular activation of LCK that phosphorylates the ITAM motifs of CD3G, CD3D, CD3E and CD247 enabling the recruitment of ZAP70. In turn ZAP70 phosphorylates LAT, which recruits numerous signaling molecules to form the LAT signalosome. The LAT signalosome propagates signal branching to three major signaling pathways, the calcium, the mitogen-activated protein kinase (MAPK) kinase and the nuclear factor NF-kappa-B (NF-kB) pathways, leading to the mobilization of transcription factors that are critical for gene expression and essential for T cell growth and differentiation. The T cell repertoire is generated in the thymus, by V-(D)-J rearrangement. This repertoire is then shaped by intrathymic selection events to generate a peripheral T cell pool of self-MH restricted, non-autoaggressive T cells. Post-thymic interaction of alpha-beta TR with the pMH complexes shapes TR structural and functional avidity. This is T cell receptor alpha variable 7 from Homo sapiens (Human).